A 392-amino-acid polypeptide reads, in one-letter code: Succinate--CoA ligase [ADP-forming] subunit beta (392 aa).

The ATP-grasp domain maps to 9-248; sequence KEILRGFGVT…TSEEDPLEVE (240 aa). ATP-binding positions include Lys-50, 57 to 59, Glu-103, Met-106, and Glu-111; that span reads GRG. 2 residues coordinate Mg(2+): Asn-203 and Asp-217. Substrate contacts are provided by residues Asn-268 and 325 to 327; that span reads GIV.

Belongs to the succinate/malate CoA ligase beta subunit family. Heterotetramer of two alpha and two beta subunits. Mg(2+) serves as cofactor.

The catalysed reaction is succinate + ATP + CoA = succinyl-CoA + ADP + phosphate. The enzyme catalyses GTP + succinate + CoA = succinyl-CoA + GDP + phosphate. Its pathway is carbohydrate metabolism; tricarboxylic acid cycle; succinate from succinyl-CoA (ligase route): step 1/1. Succinyl-CoA synthetase functions in the citric acid cycle (TCA), coupling the hydrolysis of succinyl-CoA to the synthesis of either ATP or GTP and thus represents the only step of substrate-level phosphorylation in the TCA. The beta subunit provides nucleotide specificity of the enzyme and binds the substrate succinate, while the binding sites for coenzyme A and phosphate are found in the alpha subunit. This is Succinate--CoA ligase [ADP-forming] subunit beta from Chloroherpeton thalassium (strain ATCC 35110 / GB-78).